The primary structure comprises 105 residues: UPF0235 protein A1G_07140 (105 aa).

It belongs to the UPF0235 family.

This is UPF0235 protein A1G_07140 from Rickettsia rickettsii (strain Sheila Smith).